The primary structure comprises 361 residues: tRNA pseudouridine synthase D (361 aa).

Aspartate 81 functions as the Nucleophile in the catalytic mechanism. The TRUD domain occupies 158 to 303; that stretch reads GVPNYFGSQR…MRHDRRAIAL (146 aa).

Belongs to the pseudouridine synthase TruD family.

It carries out the reaction uridine(13) in tRNA = pseudouridine(13) in tRNA. Responsible for synthesis of pseudouridine from uracil-13 in transfer RNAs. This is tRNA pseudouridine synthase D from Vibrio cholerae serotype O1 (strain ATCC 39541 / Classical Ogawa 395 / O395).